Consider the following 524-residue polypeptide: MKEESAAQLGCCHRPMALGGTGGSLSPSLDFQLFRGDQVFSACRPLPDMVDAHGPSCASWLCPLPLAPGRSALLACLQDLDLNLCTPQPAPLGTDLQGLQEDALSMKHEPPGLQASSTDDKKFTVKYPQNKDKLGKQPERAGEGAPCPAFSSHNSSSPPPLQNRKSPSPLAFCPCPPVNSISKELPFLLHAFYPGYPLLLPPPHLFTYGALPSDQCPHLLMLPQDPSYPTMAMPSLLMMVNELGHPSARWETLLPYPGAFQASGQALPSQARNPGAGAAPTDSPGLERGGMASPAKRVPLSSQTGTAALPYPLKKKNGKILYECNICGKSFGQLSNLKVHLRVHSGERPFQCALCQKSFTQLAHLQKHHLVHTGERPHKCSIPWVPGRNHWKSFQAWREREVCHKRFSSSSNLKTHLRLHSGARPFQCSVCRSRFTQHIHLKLHHRLHAPQPCGLVHTQLPLASLACLAQWHQGALDLMAVASEKHMGYDIDEVKVSSTSQGKARAVSLSSAGTPLVMGQDQNN.

Over residues asparagine 130–glycine 142 the composition is skewed to basic and acidic residues. Disordered stretches follow at residues asparagine 130–serine 166 and glutamine 265–glutamine 303. 2 consecutive C2H2-type zinc fingers follow at residues tyrosine 322–histidine 344 and phenylalanine 350–histidine 372. The C2H2-type 3; degenerate zinc finger occupies arginine 398 to histidine 420. The C2H2-type 4 zinc finger occupies phenylalanine 426–histidine 448.

This sequence belongs to the krueppel C2H2-type zinc-finger protein family. As to expression, expressed in terminally differentiated effector CD8(+) T-cells, but not in naive and central memory cells. Expressed in terminally differentiated natural killer (NK) cells and natural killer (NKT) T-cells (at protein level). Expressed strongly in effector-type CD8(+) T-cells and weakly in naive and memory CD8(+) T-cells. Expressed in terminally differentiated natural killer (NK) cells. Isoform 2 is strongly expressed in effector CD8(+) T and natural killer (NK) cells. Isoform 1 is expressed in effector CD8(+) T and natural killer (NK) cells. In terms of tissue distribution, (Microbial infection) Expressed in cytomegalovirus (CMV)-infected effector CD8(+) T-cells (at protein level).

The protein localises to the nucleus. Transcription factor that mediates a transcriptional program in various innate and adaptive immune tissue-resident lymphocyte T-cell types such as tissue-resident memory T (Trm), natural killer (trNK) and natural killer T (NKT) cells and negatively regulates gene expression of proteins that promote the egress of tissue-resident T-cell populations from non-lymphoid organs. Plays a role in the development, retention and long-term establishment of adaptive and innate tissue-resident lymphocyte T cell types in non-lymphoid organs, such as the skin and gut, but also in other nonbarrier tissues like liver and kidney, and therefore may provide immediate immunological protection against reactivating infections or viral reinfection. Also plays a role in the differentiation of both thymic and peripheral NKT cells. Negatively regulates the accumulation of interferon-gamma (IFN-gamma) in NKT cells at steady state or after antigenic stimulation. Positively regulates granzyme B production in NKT cells after innate stimulation. Associates with the transcriptional repressor PRDM1/BLIMP1 to chromatin at gene promoter regions. Functionally, lacks transcriptional repressor activity. Binds to DNA within promoter regions of the transcriptional repressor PRDM1/BLIMP1 target sites. Unable to regulate interferon-gamma (IFN-gamma) production in cytomegalovirus (CMV)-infected effector CD8(+) T-cells. In terms of biological role, transcriptional repressor that binds to DNA within promoter regions of the transcriptional repressor PRDM1/BLIMP1 target sites. Regulates interferon-gamma (IFN-gamma) production in cytomegalovirus (CMV)-infected effector CD8(+) T cells. The protein is Tissue-resident T-cell transcription regulator protein ZNF683 of Homo sapiens (Human).